The following is a 154-amino-acid chain: Superoxide dismutase [Cu-Zn] (154 aa).

Residues histidine 47 and histidine 64 each coordinate Cu cation. Cysteine 58 and cysteine 147 form a disulfide bridge. Histidine 64, histidine 72, histidine 81, and aspartate 84 together coordinate Zn(2+). Histidine 121 is a binding site for Cu cation. A substrate-binding site is contributed by arginine 144.

It belongs to the Cu-Zn superoxide dismutase family. As to quaternary structure, homodimer. Requires Cu cation as cofactor. Zn(2+) serves as cofactor.

It is found in the cytoplasm. The catalysed reaction is 2 superoxide + 2 H(+) = H2O2 + O2. In terms of biological role, destroys radicals which are normally produced within the cells and which are toxic to biological systems. The sequence is that of Superoxide dismutase [Cu-Zn] (SOD1) from Pleurocordyceps sinensis (Polycephalomyces sinensis).